Consider the following 126-residue polypeptide: Aspartate 1-decarboxylase (126 aa).

Ser-25 (schiff-base intermediate with substrate; via pyruvic acid) is an active-site residue. Ser-25 carries the pyruvic acid (Ser) modification. A substrate-binding site is contributed by Thr-57. Tyr-58 serves as the catalytic Proton donor. 73-75 contacts substrate; sequence GAA.

This sequence belongs to the PanD family. Heterooctamer of four alpha and four beta subunits. Pyruvate is required as a cofactor. Post-translationally, is synthesized initially as an inactive proenzyme, which is activated by self-cleavage at a specific serine bond to produce a beta-subunit with a hydroxyl group at its C-terminus and an alpha-subunit with a pyruvoyl group at its N-terminus.

It localises to the cytoplasm. The catalysed reaction is L-aspartate + H(+) = beta-alanine + CO2. Its pathway is cofactor biosynthesis; (R)-pantothenate biosynthesis; beta-alanine from L-aspartate: step 1/1. Its function is as follows. Catalyzes the pyruvoyl-dependent decarboxylation of aspartate to produce beta-alanine. The protein is Aspartate 1-decarboxylase of Erwinia tasmaniensis (strain DSM 17950 / CFBP 7177 / CIP 109463 / NCPPB 4357 / Et1/99).